The following is a 202-amino-acid chain: Neurensin-2 (202 aa).

2 helical membrane passes run 65-85 (VAVASLFLLLGVAALTTGYAV) and 116-136 (VVGATLCGVAGIMLAVCLFLI). The disordered stretch occupies residues 162–202 (RDEPEKLSPAFHETSSQSPFLTPPSPFGQQSVQTSQPQRDL). A compositionally biased stretch (polar residues) spans 188-202 (FGQQSVQTSQPQRDL).

Belongs to the VMP family. Expressed specifically in brain where it is widely expressed, with highest levels of expression in thalamus and hypothalamus. In brain, found in neural cell bodies and detected in many regions of the limbic system, such as the septum nucleus, horizontal and vertical limbs of the diagonal band, hippocampus, amygdaloid nucleus, and habernula nucleus. Also localizes to small vesicles found in the perinuclear region of Neuro2a and PC12 cells.

The protein resides in the membrane. In terms of biological role, may play a role in maintenance and/or transport of vesicles. In Mus musculus (Mouse), this protein is Neurensin-2.